The following is a 489-amino-acid chain: Betaine aldehyde dehydrogenase (489 aa).

Thr26 and Asp93 together coordinate K(+). 150-152 (GAW) contacts NAD(+). Residue Lys162 is the Charge relay system of the active site. An NAD(+)-binding site is contributed by 176–179 (KPSE). Val180 is a K(+) binding site. 229 to 232 (GVET) contributes to the NAD(+) binding site. Position 245 (Leu245) interacts with K(+). Glu251 (proton acceptor) is an active-site residue. Gly253, Cys285, and Glu386 together coordinate NAD(+). Cys285 serves as the catalytic Nucleophile. A Cysteine sulfenic acid (-SOH) modification is found at Cys285. Residues Lys456 and Gly459 each contribute to the K(+) site. Glu463 functions as the Charge relay system in the catalytic mechanism.

It belongs to the aldehyde dehydrogenase family. As to quaternary structure, dimer of dimers. The cofactor is K(+).

The enzyme catalyses betaine aldehyde + NAD(+) + H2O = glycine betaine + NADH + 2 H(+). It participates in amine and polyamine biosynthesis; betaine biosynthesis via choline pathway; betaine from betaine aldehyde: step 1/1. Its function is as follows. Involved in the biosynthesis of the osmoprotectant glycine betaine. Catalyzes the irreversible oxidation of betaine aldehyde to the corresponding acid. The polypeptide is Betaine aldehyde dehydrogenase (Burkholderia orbicola (strain MC0-3)).